Consider the following 283-residue polypeptide: MQKISNEIFLCSICNVSSGDCPEDCKYCTQSAHYGTQIQRYKNKSIDKIVQEAKTLREYGALGFCLVTAGRSLESQKCEYIAKAASAIKKADLGLHIIACCGSADVDSLKYLKTNGVDSYNHNLETSKEFFPHICTTHTWKERFETCENTLKAELGLLSGGIFGLGESWGDRIELLKHLQILSPHTSPLNFYIANESLPLPMQTLSPQEALECVTLAREYLPNTRLMIAGGREAVFGDNQKPLFEAGINGVVLGDYLTTDGKAPKDDVAMIESYGYVAATNCH.

The Radical SAM core domain occupies 3–232 (KISNEIFLCS…NTRLMIAGGR (230 aa)). Residues cysteine 21, cysteine 25, and cysteine 28 each coordinate [4Fe-4S] cluster. Positions 65, 100, and 225 each coordinate [2Fe-2S] cluster.

Belongs to the radical SAM superfamily. Biotin synthase family. As to quaternary structure, homodimer. [4Fe-4S] cluster is required as a cofactor. [2Fe-2S] cluster serves as cofactor.

It carries out the reaction (4R,5S)-dethiobiotin + (sulfur carrier)-SH + 2 reduced [2Fe-2S]-[ferredoxin] + 2 S-adenosyl-L-methionine = (sulfur carrier)-H + biotin + 2 5'-deoxyadenosine + 2 L-methionine + 2 oxidized [2Fe-2S]-[ferredoxin]. The protein operates within cofactor biosynthesis; biotin biosynthesis; biotin from 7,8-diaminononanoate: step 2/2. Functionally, catalyzes the conversion of dethiobiotin (DTB) to biotin by the insertion of a sulfur atom into dethiobiotin via a radical-based mechanism. This chain is Biotin synthase, found in Helicobacter hepaticus (strain ATCC 51449 / 3B1).